The following is a 310-amino-acid chain: Phosphoribosylaminoimidazole-succinocarboxamide synthase (310 aa).

The protein belongs to the SAICAR synthetase family.

The catalysed reaction is 5-amino-1-(5-phospho-D-ribosyl)imidazole-4-carboxylate + L-aspartate + ATP = (2S)-2-[5-amino-1-(5-phospho-beta-D-ribosyl)imidazole-4-carboxamido]succinate + ADP + phosphate + 2 H(+). Its pathway is purine metabolism; IMP biosynthesis via de novo pathway; 5-amino-1-(5-phospho-D-ribosyl)imidazole-4-carboxamide from 5-amino-1-(5-phospho-D-ribosyl)imidazole-4-carboxylate: step 1/2. This Cytophaga hutchinsonii (strain ATCC 33406 / DSM 1761 / CIP 103989 / NBRC 15051 / NCIMB 9469 / D465) protein is Phosphoribosylaminoimidazole-succinocarboxamide synthase.